Reading from the N-terminus, the 910-residue chain is Leucine--tRNA ligase (910 aa).

The 'HIGH' region signature appears at 50-60 (PYTNGSLHVGH). Residues 611–615 (KISKS) carry the 'KMSKS' region motif. K614 is a binding site for ATP.

This sequence belongs to the class-I aminoacyl-tRNA synthetase family.

It localises to the cytoplasm. It catalyses the reaction tRNA(Leu) + L-leucine + ATP = L-leucyl-tRNA(Leu) + AMP + diphosphate. This chain is Leucine--tRNA ligase, found in Thermoplasma acidophilum (strain ATCC 25905 / DSM 1728 / JCM 9062 / NBRC 15155 / AMRC-C165).